Reading from the N-terminus, the 92-residue chain is Protein S100-A6 (92 aa).

EF-hand domains lie at 12–47 (LVAI…IGAE) and 48–83 (LEDS…LAMI). Residues T28 and E33 each contribute to the Ca(2+) site. K40 carries the N6-acetyllysine modification. 4 residues coordinate Ca(2+): D61, N63, D65, and E72.

It belongs to the S-100 family. Homodimer; head to tail assembly of 2 subunits. Interacts with CACYBP in a calcium-dependent manner. Interacts with ANXA2 and ANXA11 (via N-terminus). Interacts with SUGT1. Interacts with TP53; has higher affinity for TP53 that is phosphorylated on its N-terminal domain, and lower affinity for TP53 that is phosphorylated on its C-terminal domain. Interacts with tropomyosin. Interacts with FKBP4. Interacts with PPP5C (via TPR repeats); the interaction is calcium-dependent and modulates PPP5C activity. Interacts with TPPP; this interaction inhibits TPPP dimerization.

The protein resides in the nucleus envelope. It is found in the cytoplasm. The protein localises to the cell membrane. May function as calcium sensor and modulator, contributing to cellular calcium signaling. May function by interacting with other proteins, such as TPR-containing proteins, and indirectly play a role in many physiological processes such as the reorganization of the actin cytoskeleton and in cell motility. Binds 2 calcium ions. Calcium binding is cooperative. In Equus caballus (Horse), this protein is Protein S100-A6 (S100A6).